The primary structure comprises 122 residues: Large ribosomal subunit protein uL14 (122 aa).

The protein belongs to the universal ribosomal protein uL14 family. As to quaternary structure, part of the 50S ribosomal subunit. Forms a cluster with proteins L3 and L19. In the 70S ribosome, L14 and L19 interact and together make contacts with the 16S rRNA in bridges B5 and B8.

Functionally, binds to 23S rRNA. Forms part of two intersubunit bridges in the 70S ribosome. This is Large ribosomal subunit protein uL14 from Marinobacter nauticus (strain ATCC 700491 / DSM 11845 / VT8) (Marinobacter aquaeolei).